A 424-amino-acid chain; its full sequence is CinA-like protein (424 aa).

The protein belongs to the CinA family.

The chain is CinA-like protein from Shewanella denitrificans (strain OS217 / ATCC BAA-1090 / DSM 15013).